Consider the following 855-residue polypeptide: MGEISQETVEKYLEANPQFAKEYFNRKLQVEVPSGGAQAPASASFPGRTLAEEAALYLELLEVLLEEAGSVELAAHRALQRLAQLLQADRCSMFLCRARNGTPEVASKLLDVTPTSKFEDNLVVPDREAVFPLDVGIVGWVAHTKKTFNVPDVKKNSHFSDFMDKQTGYVTRNLLATPIVMGKEVLAVFMAVNKVDASEFSKQDEEVFSKYLSFVSIILKLHHTNYLYNIESRRSQILMWSANKVFEELTDVERQFHKALYTVRTYLNCERYSIGLLDMTKEKEFYDEWPVKLGEVEPYKGPKTPDGREVIFYKIIDYILHGKEEIKVIPTPPMDHWTLISGLPTYVAENGFICNMLNAPADEYFTFQKGPVDETGWVIKNVLSLPIVNKKEDIVGVATFYNRKDGKPFDEYDEHIAETLTQFLGWSLLNTDTYEKMNKLENRKDIAQEMLMNHTKATPDEIKSILKFKEKLNIDVIEDCEEKQLVTILKEDLPDPRTADLYEFRFRHLPITEHELIKCGLRLFFEINVVEKFKVPVEVLTRWMYTVRKGYRAVTYHNWRHGFNVGQTMFTLLMTGRLKKYYTDLEAFAMLAAAFCHDIDHRGTNNLYQMKSTSPLARLHGSSILERHHLEYSKTLLQDESLNIFQNLNKRQYETVIHLFEVAIIATDLALYFKKRTMFQKIVDACEKMETEEEAIKYVTIDPTKKEIIMAMMMTACDLSAITKPWEVQSQVALLVANEFWEQGDLERTVLQQQPIPMMDRNKKDELPKLQVGFIDFVCTFVYKEFSRFHKEITPMLNGLQNNRVEWKSLADEYDEKMKVIEEMKKQEEGNTTEKAVEDSGGGGDDKKSKTCLML.

GAF domains lie at 70 to 219 (SVEL…SIIL) and 251 to 428 (DVER…GWSL). Residues S92, S116, 164–167 (DKQT), and T171 contribute to the 3',5'-cyclic GMP site. Positions 481–814 (EEKQLVTILK…VEWKSLADEY (334 aa)) constitute a PDEase domain. The Proton donor role is filled by H557. 4 residues coordinate a divalent metal cation: H561, H597, D598, and D718. The interval 823–855 (EMKKQEEGNTTEKAVEDSGGGGDDKKSKTCLML) is disordered. C852 is subject to Cysteine methyl ester. C852 carries S-geranylgeranyl cysteine lipidation. Positions 853–855 (LML) are cleaved as a propeptide — removed in mature form.

Belongs to the cyclic nucleotide phosphodiesterase family. Composed of two alpha' subunits that are associated with 3 smaller proteins of 11, 13, and 15 kDa. It depends on a divalent metal cation as a cofactor.

It localises to the cell membrane. It carries out the reaction 3',5'-cyclic GMP + H2O = GMP + H(+). As cone-specific cGMP phosphodiesterase, it plays an essential role in light detection and cone phototransduction by rapidly decreasing intracellular levels of cGMP. The chain is Cone cGMP-specific 3',5'-cyclic phosphodiesterase subunit alpha' (PDE6C) from Bos taurus (Bovine).